Reading from the N-terminus, the 308-residue chain is Ribonuclease HIII (308 aa).

Positions 88-304 constitute an RNase H type-2 domain; sequence FHCIGSDEAG…RDKAIHLMNQ (217 aa). Positions 94, 95, and 199 each coordinate a divalent metal cation.

This sequence belongs to the RNase HII family. RnhC subfamily. Mn(2+) serves as cofactor. It depends on Mg(2+) as a cofactor.

The protein localises to the cytoplasm. It catalyses the reaction Endonucleolytic cleavage to 5'-phosphomonoester.. Functionally, endonuclease that specifically degrades the RNA of RNA-DNA hybrids. This chain is Ribonuclease HIII, found in Staphylococcus epidermidis (strain ATCC 12228 / FDA PCI 1200).